The primary structure comprises 443 residues: Pyrrolysine--tRNA ligase (443 aa).

A disordered region spans residues 103–177; sequence VRKAMPKSVA…PAAPVPTSAP (75 aa). Residues 131-177 show a composition bias toward low complexity; the sequence is PAPATPVSAPAQAPAPSTGSASATSASAQRMANSAAAPAAPVPTSAP.

It belongs to the class-II aminoacyl-tRNA synthetase family.

It is found in the cytoplasm. It carries out the reaction tRNA(Pyl) + L-pyrrolysine + ATP = L-pyrrolysyl-tRNA(Pyl) + AMP + diphosphate. Catalyzes the attachment of pyrrolysine to tRNA(Pyl). Pyrrolysine is a lysine derivative encoded by the termination codon UAG. This chain is Pyrrolysine--tRNA ligase, found in Methanosarcina acetivorans (strain ATCC 35395 / DSM 2834 / JCM 12185 / C2A).